The chain runs to 490 residues: Endoglucanase 13 (490 aa).

The N-terminal stretch at 1 to 26 (MSQLKNGSSQCLWTSICIVLIVMSMA) is a signal peptide. N-linked (GlcNAc...) asparagine glycosylation is present at Asn6. Asp86 serves as the catalytic Nucleophile. Active-site residues include His412, Asp464, and Glu473.

The protein belongs to the glycosyl hydrolase 9 (cellulase E) family.

Its subcellular location is the secreted. It carries out the reaction Endohydrolysis of (1-&gt;4)-beta-D-glucosidic linkages in cellulose, lichenin and cereal beta-D-glucans.. In Arabidopsis thaliana (Mouse-ear cress), this protein is Endoglucanase 13.